The sequence spans 195 residues: Imidazoleglycerol-phosphate dehydratase (195 aa).

It belongs to the imidazoleglycerol-phosphate dehydratase family.

The protein localises to the cytoplasm. It carries out the reaction D-erythro-1-(imidazol-4-yl)glycerol 3-phosphate = 3-(imidazol-4-yl)-2-oxopropyl phosphate + H2O. The protein operates within amino-acid biosynthesis; L-histidine biosynthesis; L-histidine from 5-phospho-alpha-D-ribose 1-diphosphate: step 6/9. This is Imidazoleglycerol-phosphate dehydratase from Aminomonas aminovorus.